Here is a 70-residue protein sequence, read N- to C-terminus: NAD(P)H-quinone oxidoreductase subunit L (70 aa).

The next 2 helical transmembrane spans lie at 2–22 (IVPL…PVAL) and 39–59 (TFMY…SPFV).

This sequence belongs to the complex I NdhL subunit family. In terms of assembly, NDH-1 can be composed of about 15 different subunits; different subcomplexes with different compositions have been identified which probably have different functions.

It localises to the cellular thylakoid membrane. The catalysed reaction is a plastoquinone + NADH + (n+1) H(+)(in) = a plastoquinol + NAD(+) + n H(+)(out). It carries out the reaction a plastoquinone + NADPH + (n+1) H(+)(in) = a plastoquinol + NADP(+) + n H(+)(out). NDH-1 shuttles electrons from an unknown electron donor, via FMN and iron-sulfur (Fe-S) centers, to quinones in the respiratory and/or the photosynthetic chain. The immediate electron acceptor for the enzyme in this species is believed to be plastoquinone. Couples the redox reaction to proton translocation, and thus conserves the redox energy in a proton gradient. Cyanobacterial NDH-1 also plays a role in inorganic carbon-concentration. The chain is NAD(P)H-quinone oxidoreductase subunit L from Trichormus variabilis (strain ATCC 29413 / PCC 7937) (Anabaena variabilis).